The primary structure comprises 398 residues: Thyrotropin-releasing hormone receptor (398 aa).

Residues 1–28 are Extracellular-facing; it reads MENETGSELNQTQLQPRAVVALEYQVVT. Residues asparagine 3 and asparagine 10 are each glycosylated (N-linked (GlcNAc...) asparagine). The chain crosses the membrane as a helical span at residues 29 to 51; that stretch reads ILLVLIICGLGIVGNIMVVLVVM. Over 52–61 the chain is Cytoplasmic; the sequence is RTKHMRTPTN. The helical transmembrane segment at 62–83 threads the bilayer; it reads CYLVSLAVADLMVLVAAGLPNI. Residues 84-99 are Extracellular-facing; sequence TDSIYGSWVYGYVGCL. A disulfide bridge connects residues cysteine 98 and cysteine 179. A helical transmembrane segment spans residues 100-121; the sequence is CITYLQYLGINASSCSITAFTI. The Cytoplasmic segment spans residues 122–144; that stretch reads ERYIAICHPIKAQFLCTFSRAKK. A helical transmembrane segment spans residues 145-168; the sequence is IIIFVWAFTSIYCMLWFFLLDLNI. Over 169–193 the chain is Extracellular; the sequence is STYKDAIVVSCGYKISRNYYSPIYL. The chain crosses the membrane as a helical span at residues 194–215; sequence MDFGVFYVVPMILATVLYGFIA. Over 216–266 the chain is Cytoplasmic; the sequence is RILFLNPIPSDPKENSNMWKNDSTHQNKNLNSKTSNRYFNSTVSSRKQVTK. The helical transmembrane segment at 267–288 threads the bilayer; the sequence is MLAVVVILFALLWMPYRTLVVV. The Extracellular segment spans residues 289–296; that stretch reads NSFLSSPF. A helical transmembrane segment spans residues 297-319; that stretch reads QENWFLLFCRICIYLNSAINPVI. Over 320 to 398 the chain is Cytoplasmic; the sequence is YNLMSQKFRA…LASEITFNQS (79 aa).

It belongs to the G-protein coupled receptor 1 family.

The protein localises to the cell membrane. Functionally, receptor for thyrotropin-releasing hormone (TRH). Upon ligand binding, this G-protein-coupled receptor triggers activation of the phosphatidylinositol (IP3)-calcium-protein kinase C (PKC) pathway. The sequence is that of Thyrotropin-releasing hormone receptor (TRHR) from Bos taurus (Bovine).